We begin with the raw amino-acid sequence, 508 residues long: MMKSLFLFSAHPKPPPLPPSPHLRKLLRLTASASTSASSPPRAGCSRGPAHARPRPSPRPSPSSSLYARPSLLDMERGRAARRADVDAFLASLGVDPGELAGLELPATVDVMRERVEFLHSLDLSNEDLAAYPLALGCSVRKNMVPVLDYLGKLGVRQDALPDLLRRYPQVLHASVVVDLAPVVKYLQGMDVRPHDVPRVLERYPELLGFKLEGTMSTSIAYLVGIGVARRQVGSVITRFPEVLGMRVGKIIKPFVEHLEGIGLQRLAIARIIEKKPYVLGFGLEDKVKPNIEALLEFGVRKEALAFIVAQYPDILGIELRDKLATQQSLFESSILVSSEDFGRVIERMPQAISLGRTAVLKHVNFLTSCGFLLSQVSKMVVACPQLLALNMDIMKMSFEYFQNEMERDLEELVEFPAFFTYGLESTVRPRHEMVAKKGFTCSLAWLLNCSDAKFDERMKYDTIGIEEMEVDNSFDTNTLSERVEDEVEDEDLDEDSDYDSTDDEFIE.

A chloroplast-targeting transit peptide spans 1–79 (MMKSLFLFSA…PSLLDMERGR (79 aa)). The segment covering 28-49 (RLTASASTSASSPPRAGCSRGP) has biased composition (low complexity). 2 disordered regions span residues 28 to 69 (RLTA…LYAR) and 475 to 508 (FDTN…EFIE). Over residues 484 to 508 (VEDEVEDEDLDEDSDYDSTDDEFIE) the composition is skewed to acidic residues.

It belongs to the mTERF family.

The protein resides in the plastid. It localises to the chloroplast stroma. Functionally, transcription termination factor required for processing and steady-state levels of plastid transcripts. Required for splicing of the chloroplastic group II intron. Required for the accumulation of 16S and 23S ribosomes. This is Transcription termination factor MTERF4, chloroplastic from Oryza sativa subsp. japonica (Rice).